Consider the following 37-residue polypeptide: Omega/M-ectatotoxin-Et1a subunit A (37 aa).

C12 and C34 are oxidised to a cystine.

It belongs to the ectatomin family. Ectatomin-Et subfamily. Heterodimer of an A and a B chain; disulfide-linked. As to expression, expressed by the venom gland.

The protein resides in the secreted. Its subcellular location is the target cell membrane. Algogenic for animals, human and insects. At high concentrations (0.5-1 uM), it acts as a pore-forming protein that forms nonselective cation channels both in cell and artificial membranes. It is weakly selective for cation over anions channel conductance is identical in both directions. At lower concentrations (1-10 nM), this heterodimer inhibits cardiac L-type calcium currents in isolated rat cardiac ventricular myocytes. This chain is Omega/M-ectatotoxin-Et1a subunit A, found in Ectatomma tuberculatum (Selva ant).